An 89-amino-acid chain; its full sequence is Small ribosomal subunit protein uS15 (89 aa).

The protein belongs to the universal ribosomal protein uS15 family. In terms of assembly, part of the 30S ribosomal subunit. Forms a bridge to the 50S subunit in the 70S ribosome, contacting the 23S rRNA.

One of the primary rRNA binding proteins, it binds directly to 16S rRNA where it helps nucleate assembly of the platform of the 30S subunit by binding and bridging several RNA helices of the 16S rRNA. Its function is as follows. Forms an intersubunit bridge (bridge B4) with the 23S rRNA of the 50S subunit in the ribosome. This is Small ribosomal subunit protein uS15 from Limosilactobacillus fermentum (strain NBRC 3956 / LMG 18251) (Lactobacillus fermentum).